The following is a 749-amino-acid chain: MFKRTIPLFAAFTLAISPSIFPNYAHAQEDKPKTNQYWWPKMLDLSPLRQPNATSNPMGEKFNYAEEFNSLDLNAVIEDLKKLMTTSQDWWPADYGNYGPLFIRMSWHAAGTYRIYDGRGGANGGFQRFAPQNSWPDNANLDKARRLLWPIKQKYGRKISWADLLVLAGNVAMESMGFKTIGFAGGREDAWEAININWGTEGKWLESKRQDKVGKLEKPLAATVMGLIYVNPEGPNGVPDPLAAAEKIRETFGRMAMNDEETVALIAGGHAFGKTHGAASGKYLGPAPEAAGIEEQGFGWKNSYGSGKGKDTITSGLEGAWTVTPTHWSHNYLQNLFNFNWVKTKSPGGAIQWVPENSNASSMVPDAFDPSKRHAPVMLTTDLALKFDPVYSKIAKRFLDNPKEFDDAFARAWFKLIHRDMGPRSRYLGSLVPKEIMIWQDPVPPVDYKLVDANDIANLKGKILNSGLTTPELVKTAWASASTFRGTDMRGGANGARIRLAPQKDWPANDPQELAKVLKTLESIQNNFNNAQADGKKISLADLIVLGGNAAIEQAAKQAGYDIIVPFTPGRTDATQGMTDVKSFEVLEPKADGFRNYFDKSNNMSPPEMLVDKASLLKLSVPEMTVLVGGMRVLNANTGQNQYGVFTDKPGTLNNDFFINLLSMSTEWKKSSETEGIYEGYDRKTGKLKWKATSVDLIFGANSELRAVAEAYATDDAKDKFIQDFVNAWVKVMTADRFDIKAANANINS.

An N-terminal signal peptide occupies residues 1–27; sequence MFKRTIPLFAAFTLAISPSIFPNYAHA. The tryptophyl-tyrosyl-methioninium (Trp-Tyr) (with M-255) cross-link spans 107–229; it reads WHAAGTYRIY…LAATVMGLIY (123 aa). Residue His108 is the Proton acceptor of the active site. Residues 229 to 255 constitute a cross-link (tryptophyl-tyrosyl-methioninium (Tyr-Met) (with W-107)); the sequence is YVNPEGPNGVPDPLAAAEKIRETFGRM. Position 270 (His270) interacts with heme b.

Belongs to the peroxidase family. Peroxidase/catalase subfamily. As to quaternary structure, homodimer or homotetramer. Heme b serves as cofactor. In terms of processing, formation of the three residue Trp-Tyr-Met cross-link is important for the catalase, but not the peroxidase activity of the enzyme.

It carries out the reaction H2O2 + AH2 = A + 2 H2O. The catalysed reaction is 2 H2O2 = O2 + 2 H2O. Bifunctional enzyme with both catalase and broad-spectrum peroxidase activity. The protein is Catalase-peroxidase 2 of Legionella pneumophila (strain Lens).